The sequence spans 625 residues: Glutamyl-tRNA(Gln) amidotransferase subunit E (625 aa).

The protein belongs to the GatB/GatE family. GatE subfamily. As to quaternary structure, heterodimer of GatD and GatE.

The enzyme catalyses L-glutamyl-tRNA(Gln) + L-glutamine + ATP + H2O = L-glutaminyl-tRNA(Gln) + L-glutamate + ADP + phosphate + H(+). Its function is as follows. Allows the formation of correctly charged Gln-tRNA(Gln) through the transamidation of misacylated Glu-tRNA(Gln) in organisms which lack glutaminyl-tRNA synthetase. The reaction takes place in the presence of glutamine and ATP through an activated gamma-phospho-Glu-tRNA(Gln). The GatDE system is specific for glutamate and does not act on aspartate. In Caldivirga maquilingensis (strain ATCC 700844 / DSM 13496 / JCM 10307 / IC-167), this protein is Glutamyl-tRNA(Gln) amidotransferase subunit E.